Consider the following 266-residue polypeptide: Translation initiation factor 2 subunit alpha (266 aa).

The 72-residue stretch at 12-83 folds into the S1 motif domain; that stretch reads GEILIATVKQ…RKGTVDVSLK (72 aa).

Belongs to the eIF-2-alpha family. Heterotrimer composed of an alpha, a beta and a gamma chain.

EIF-2 functions in the early steps of protein synthesis by forming a ternary complex with GTP and initiator tRNA. The protein is Translation initiation factor 2 subunit alpha of Saccharolobus islandicus (strain L.S.2.15 / Lassen #1) (Sulfolobus islandicus).